A 296-amino-acid polypeptide reads, in one-letter code: Ribosomal RNA small subunit methyltransferase A (296 aa).

S-adenosyl-L-methionine is bound by residues N40, V42, G67, E88, D118, and N137.

This sequence belongs to the class I-like SAM-binding methyltransferase superfamily. rRNA adenine N(6)-methyltransferase family. RsmA subfamily.

It is found in the cytoplasm. It catalyses the reaction adenosine(1518)/adenosine(1519) in 16S rRNA + 4 S-adenosyl-L-methionine = N(6)-dimethyladenosine(1518)/N(6)-dimethyladenosine(1519) in 16S rRNA + 4 S-adenosyl-L-homocysteine + 4 H(+). Functionally, specifically dimethylates two adjacent adenosines (A1518 and A1519) in the loop of a conserved hairpin near the 3'-end of 16S rRNA in the 30S particle. May play a critical role in biogenesis of 30S subunits. This Rhodococcus opacus (strain B4) protein is Ribosomal RNA small subunit methyltransferase A.